Here is a 371-residue protein sequence, read N- to C-terminus: DNA replication and repair protein RecF (371 aa).

30 to 37 is an ATP binding site; it reads GENAQGKT.

Belongs to the RecF family.

It is found in the cytoplasm. Functionally, the RecF protein is involved in DNA metabolism; it is required for DNA replication and normal SOS inducibility. RecF binds preferentially to single-stranded, linear DNA. It also seems to bind ATP. In Staphylococcus epidermidis (strain ATCC 12228 / FDA PCI 1200), this protein is DNA replication and repair protein RecF.